A 106-amino-acid polypeptide reads, in one-letter code: uncharacterized protein (106 aa).

Disordered stretches follow at residues 27–47 (FSDS…DVSD) and 83–106 (SPAM…VQSK). Positions 29–39 (DSEDEPDDEAS) are enriched in acidic residues. Over residues 94-106 (GIEREDRGGVQSK) the composition is skewed to basic and acidic residues.

The protein localises to the mitochondrion. This is an uncharacterized protein from Arabidopsis thaliana (Mouse-ear cress).